The sequence spans 508 residues: Mitochondrial distribution and morphology protein 10 (508 aa).

The tract at residues 160 to 195 (PAHPTSTRPTPPQTPPSHTRQPSEPSTPAPSPTPGN) is disordered.

The protein belongs to the MDM10 family. Component of the ER-mitochondria encounter structure (ERMES) or MDM complex, composed of MMM1, MDM10, MDM12 and MDM34. Associates with the mitochondrial outer membrane sorting assembly machinery SAM(core) complex.

Its subcellular location is the mitochondrion outer membrane. Its function is as follows. Component of the ERMES/MDM complex, which serves as a molecular tether to connect the endoplasmic reticulum and mitochondria. Components of this complex are involved in the control of mitochondrial shape and protein biogenesis and may function in phospholipid exchange. MDM10 is involved in the late assembly steps of the general translocase of the mitochondrial outer membrane (TOM complex). Functions in the TOM40-specific route of the assembly of outer membrane beta-barrel proteins, including the association of TOM40 with the receptor TOM22 and small TOM proteins. Can associate with the SAM(core) complex as well as the MDM12-MMM1 complex, both involved in late steps of the major beta-barrel assembly pathway, that is responsible for biogenesis of all outer membrane beta-barrel proteins. May act as a switch that shuttles between both complexes and channels precursor proteins into the TOM40-specific pathway. Plays a role in mitochondrial morphology and in the inheritance of mitochondria. This chain is Mitochondrial distribution and morphology protein 10, found in Cryptococcus neoformans var. neoformans serotype D (strain B-3501A) (Filobasidiella neoformans).